A 109-amino-acid chain; its full sequence is Anther-specific protein MZm3-3 (109 aa).

Residues 1–41 (MTATTTTAAGGGKVQPRGLPVALSLLLLLVLAAGLGGGAEA) form the signal peptide. 4 disulfides stabilise this stretch: C45-C86, C55-C75, C76-C101, and C88-C108.

This sequence belongs to the A9/FIL1 family. Tapetum of anthers.

Its subcellular location is the secreted. In Zea mays (Maize), this protein is Anther-specific protein MZm3-3.